Here is a 172-residue protein sequence, read N- to C-terminus: Sec-independent protein translocase protein TatB (172 aa).

Residues 1-21 traverse the membrane as a helical segment; it reads MFDIGWSELLVIGVVALIAIG.

This sequence belongs to the TatB family. In terms of assembly, the Tat system comprises two distinct complexes: a TatABC complex, containing multiple copies of TatA, TatB and TatC subunits, and a separate TatA complex, containing only TatA subunits. Substrates initially bind to the TatABC complex, which probably triggers association of the separate TatA complex to form the active translocon.

The protein resides in the cell inner membrane. Functionally, part of the twin-arginine translocation (Tat) system that transports large folded proteins containing a characteristic twin-arginine motif in their signal peptide across membranes. Together with TatC, TatB is part of a receptor directly interacting with Tat signal peptides. TatB may form an oligomeric binding site that transiently accommodates folded Tat precursor proteins before their translocation. The sequence is that of Sec-independent protein translocase protein TatB from Rhodopseudomonas palustris (strain BisB18).